Here is a 506-residue protein sequence, read N- to C-terminus: Maturase K (506 aa).

The protein belongs to the intron maturase 2 family. MatK subfamily.

The protein resides in the plastid. It localises to the chloroplast. In terms of biological role, usually encoded in the trnK tRNA gene intron. Probably assists in splicing its own and other chloroplast group II introns. This is Maturase K from Gaultheria procumbens (Wintergreen).